A 181-amino-acid chain; its full sequence is 6,7-dimethyl-8-ribityllumazine synthase (181 aa).

5-amino-6-(D-ribitylamino)uracil-binding positions include Tyr30, 61 to 63 (ALE), and 87 to 89 (CII). 92 to 93 (ET) provides a ligand contact to (2S)-2-hydroxy-3-oxobutyl phosphate. Residue His95 is the Proton donor of the active site. Asn120 provides a ligand contact to 5-amino-6-(D-ribitylamino)uracil. Position 134 (Arg134) interacts with (2S)-2-hydroxy-3-oxobutyl phosphate.

The protein belongs to the DMRL synthase family.

It carries out the reaction (2S)-2-hydroxy-3-oxobutyl phosphate + 5-amino-6-(D-ribitylamino)uracil = 6,7-dimethyl-8-(1-D-ribityl)lumazine + phosphate + 2 H2O + H(+). Its pathway is cofactor biosynthesis; riboflavin biosynthesis; riboflavin from 2-hydroxy-3-oxobutyl phosphate and 5-amino-6-(D-ribitylamino)uracil: step 1/2. Functionally, catalyzes the formation of 6,7-dimethyl-8-ribityllumazine by condensation of 5-amino-6-(D-ribitylamino)uracil with 3,4-dihydroxy-2-butanone 4-phosphate. This is the penultimate step in the biosynthesis of riboflavin. In Beijerinckia indica subsp. indica (strain ATCC 9039 / DSM 1715 / NCIMB 8712), this protein is 6,7-dimethyl-8-ribityllumazine synthase.